Here is a 264-residue protein sequence, read N- to C-terminus: S-adenosylmethionine decarboxylase proenzyme (264 aa).

The Schiff-base intermediate with substrate; via pyruvic acid role is filled by S112. Residue S112 is modified to Pyruvic acid (Ser); by autocatalysis. The Proton acceptor; for processing activity role is filled by H117. C140 serves as the catalytic Proton donor; for catalytic activity.

Belongs to the prokaryotic AdoMetDC family. Type 2 subfamily. As to quaternary structure, heterooctamer of four alpha and four beta chains arranged as a tetramer of alpha/beta heterodimers. It depends on pyruvate as a cofactor. In terms of processing, is synthesized initially as an inactive proenzyme. Formation of the active enzyme involves a self-maturation process in which the active site pyruvoyl group is generated from an internal serine residue via an autocatalytic post-translational modification. Two non-identical subunits are generated from the proenzyme in this reaction, and the pyruvate is formed at the N-terminus of the alpha chain, which is derived from the carboxyl end of the proenzyme. The post-translation cleavage follows an unusual pathway, termed non-hydrolytic serinolysis, in which the side chain hydroxyl group of the serine supplies its oxygen atom to form the C-terminus of the beta chain, while the remainder of the serine residue undergoes an oxidative deamination to produce ammonia and the pyruvoyl group blocking the N-terminus of the alpha chain.

The enzyme catalyses S-adenosyl-L-methionine + H(+) = S-adenosyl 3-(methylsulfanyl)propylamine + CO2. Its pathway is amine and polyamine biosynthesis; S-adenosylmethioninamine biosynthesis; S-adenosylmethioninamine from S-adenosyl-L-methionine: step 1/1. Functionally, catalyzes the decarboxylation of S-adenosylmethionine to S-adenosylmethioninamine (dcAdoMet), the propylamine donor required for the synthesis of the polyamines spermine and spermidine from the diamine putrescine. This chain is S-adenosylmethionine decarboxylase proenzyme, found in Salmonella gallinarum (strain 287/91 / NCTC 13346).